Consider the following 201-residue polypeptide: Probable GTP-binding protein EngB (201 aa).

The 176-residue stretch at 22-197 (TFPEYAFIGR…LNYIESINKE (176 aa)) folds into the EngB-type G domain. Residues 30-37 (GRSNVGKS), 57-61 (GKTML), 75-78 (DLPG), 142-145 (TKAD), and 175-178 (ITSS) contribute to the GTP site. Mg(2+) is bound by residues S37 and T59.

Belongs to the TRAFAC class TrmE-Era-EngA-EngB-Septin-like GTPase superfamily. EngB GTPase family. Mg(2+) is required as a cofactor.

Necessary for normal cell division and for the maintenance of normal septation. The protein is Probable GTP-binding protein EngB of Bacteroides fragilis (strain YCH46).